The following is a 692-amino-acid chain: Elongation factor G (692 aa).

The region spanning 9–283 is the tr-type G domain; it reads DKLRNIGIMA…AVIDYLPSPL (275 aa). Residues 18–25, 82–86, and 136–139 contribute to the GTP site; these read AHIDAGKT, DTPGH, and NKMD.

It belongs to the TRAFAC class translation factor GTPase superfamily. Classic translation factor GTPase family. EF-G/EF-2 subfamily.

It localises to the cytoplasm. Its function is as follows. Catalyzes the GTP-dependent ribosomal translocation step during translation elongation. During this step, the ribosome changes from the pre-translocational (PRE) to the post-translocational (POST) state as the newly formed A-site-bound peptidyl-tRNA and P-site-bound deacylated tRNA move to the P and E sites, respectively. Catalyzes the coordinated movement of the two tRNA molecules, the mRNA and conformational changes in the ribosome. The protein is Elongation factor G (fusA) of Thermotoga maritima (strain ATCC 43589 / DSM 3109 / JCM 10099 / NBRC 100826 / MSB8).